The sequence spans 133 residues: C-C motif chemokine 21a (133 aa).

The N-terminal stretch at 1 to 23 is a signal peptide; it reads MAQMMTLSLLSLVLALCIPWTQG. Disulfide bonds link C31–C57, C32–C75, and C103–C122. Residues 86–133 are disordered; it reads LMRRLDQPPAPGKQSPGCRKNRGTSKSGKKGKGSKGCKRTEQTQPSRG. Residues 98–133 are C-terminal basic extension; it reads KQSPGCRKNRGTSKSGKKGKGSKGCKRTEQTQPSRG. Basic residues predominate over residues 104–122; that stretch reads RKNRGTSKSGKKGKGSKGC.

Belongs to the intercrine beta (chemokine CC) family. In terms of assembly, binds to CCR7 and to CXCR3. Interacts with PDPN; relocalizes PDPN to the basolateral membrane. Interacts with GPR174. In terms of tissue distribution, expressed strongly in lung, spleen, thymus, peripheral and mesentric lymph nodes. Also expressed in the testis, kidney, liver, and heart.

The protein localises to the secreted. Its function is as follows. Inhibits hemopoiesis and stimulates chemotaxis. Chemotactic in vitro for thymocytes and activated T-cells, but not for B-cells, macrophages, or neutrophils. Potent mesangial cell chemoattractant. Shows preferential activity towards naive T-cells. May play a role in mediating homing of lymphocytes to secondary lymphoid organs. In Mus musculus (Mouse), this protein is C-C motif chemokine 21a (Ccl21a).